A 361-amino-acid chain; its full sequence is Phospho-N-acetylmuramoyl-pentapeptide-transferase (361 aa).

10 helical membrane passes run 27 to 47, 72 to 92, 99 to 119, 139 to 159, 169 to 189, 200 to 220, 240 to 260, 264 to 284, 289 to 309, and 338 to 358; these read GALF…ISLL, TPTM…FLWA, VWIT…DDYL, ALIA…GLAY, AIVN…VGAG, GLAI…AYLV, LAVV…FNAP, IFMG…VAVA, IVLA…IIQV, and QVVI…LATL.

Belongs to the glycosyltransferase 4 family. MraY subfamily. Requires Mg(2+) as cofactor.

Its subcellular location is the cell inner membrane. It catalyses the reaction UDP-N-acetyl-alpha-D-muramoyl-L-alanyl-gamma-D-glutamyl-meso-2,6-diaminopimeloyl-D-alanyl-D-alanine + di-trans,octa-cis-undecaprenyl phosphate = di-trans,octa-cis-undecaprenyl diphospho-N-acetyl-alpha-D-muramoyl-L-alanyl-D-glutamyl-meso-2,6-diaminopimeloyl-D-alanyl-D-alanine + UMP. It participates in cell wall biogenesis; peptidoglycan biosynthesis. In terms of biological role, catalyzes the initial step of the lipid cycle reactions in the biosynthesis of the cell wall peptidoglycan: transfers peptidoglycan precursor phospho-MurNAc-pentapeptide from UDP-MurNAc-pentapeptide onto the lipid carrier undecaprenyl phosphate, yielding undecaprenyl-pyrophosphoryl-MurNAc-pentapeptide, known as lipid I. This chain is Phospho-N-acetylmuramoyl-pentapeptide-transferase, found in Methylobacterium sp. (strain 4-46).